A 160-amino-acid polypeptide reads, in one-letter code: SsrA-binding protein (160 aa).

The protein belongs to the SmpB family.

The protein localises to the cytoplasm. In terms of biological role, required for rescue of stalled ribosomes mediated by trans-translation. Binds to transfer-messenger RNA (tmRNA), required for stable association of tmRNA with ribosomes. tmRNA and SmpB together mimic tRNA shape, replacing the anticodon stem-loop with SmpB. tmRNA is encoded by the ssrA gene; the 2 termini fold to resemble tRNA(Ala) and it encodes a 'tag peptide', a short internal open reading frame. During trans-translation Ala-aminoacylated tmRNA acts like a tRNA, entering the A-site of stalled ribosomes, displacing the stalled mRNA. The ribosome then switches to translate the ORF on the tmRNA; the nascent peptide is terminated with the 'tag peptide' encoded by the tmRNA and targeted for degradation. The ribosome is freed to recommence translation, which seems to be the essential function of trans-translation. This is SsrA-binding protein from Mycobacterium leprae (strain Br4923).